Consider the following 82-residue polypeptide: Delta-actitoxin-Aeq2c (82 aa).

Positions 1-19 (MNRLMILVFAAVFLALASA) are cleaved as a signal peptide. The propeptide occupies 20-26 (DEDVDIA). 3 disulfides stabilise this stretch: C32–C79, C34–C69, and C62–C80.

Belongs to the sea anemone sodium channel inhibitory toxin family. Type I subfamily.

It localises to the secreted. The protein resides in the nematocyst. In terms of biological role, binds specifically to voltage-gated sodium channels (Nav), thereby delaying their inactivation during signal transduction. Causes death to crabs. In Actinia equina (Beadlet anemone), this protein is Delta-actitoxin-Aeq2c.